A 208-amino-acid polypeptide reads, in one-letter code: Pectinesterase inhibitor 6 (208 aa).

The N-terminal stretch at 1–30 (MTSSSSSPITFTLLLLLSLLVALNPNPSLA) is a signal peptide. Cysteines 53 and 62 form a disulfide. Residues Asn54 and Asn75 are each glycosylated (N-linked (GlcNAc...) asparagine). Residues Cys118 and Cys165 are joined by a disulfide bond.

Belongs to the PMEI family.

It localises to the secreted. The protein resides in the extracellular space. The protein localises to the apoplast. In terms of biological role, pectin methylesterase (PME) inhibitor that targets PME from seeds and modulates PME activity and pectin methylesterification during seed germination. Promotes mucilage release by limiting methylesterification of homogalacturonan in seed coat epidermal cells. The polypeptide is Pectinesterase inhibitor 6 (Arabidopsis thaliana (Mouse-ear cress)).